Here is a 226-residue protein sequence, read N- to C-terminus: Ribonuclease 3 (226 aa).

An RNase III domain is found at 6 to 128 (INRLQRKLGY…LIGGIFLDSD (123 aa)). E41 is a binding site for Mg(2+). The active site involves D45. Mg(2+)-binding residues include D114 and E117. Residue E117 is part of the active site. Positions 155–225 (DPKTRLQEFL…AEQALKQLEL (71 aa)) constitute a DRBM domain.

This sequence belongs to the ribonuclease III family. Homodimer. The cofactor is Mg(2+).

It localises to the cytoplasm. It carries out the reaction Endonucleolytic cleavage to 5'-phosphomonoester.. Its function is as follows. Digests double-stranded RNA. Involved in the processing of primary rRNA transcript to yield the immediate precursors to the large and small rRNAs (23S and 16S). Processes some mRNAs, and tRNAs when they are encoded in the rRNA operon. Processes pre-crRNA and tracrRNA of type II CRISPR loci if present in the organism. In Edwardsiella ictaluri (strain 93-146), this protein is Ribonuclease 3.